The primary structure comprises 332 residues: Glycerol-3-phosphate dehydrogenase [NAD(P)+] (332 aa).

Positions 11, 30, and 108 each coordinate NADPH. Sn-glycerol 3-phosphate-binding residues include lysine 108, glycine 137, and serine 139. Residue alanine 141 coordinates NADPH. Residues lysine 192, aspartate 245, serine 255, arginine 256, and asparagine 257 each coordinate sn-glycerol 3-phosphate. Residue lysine 192 is the Proton acceptor of the active site. Arginine 256 is a binding site for NADPH. The NADPH site is built by valine 280 and glutamate 282.

This sequence belongs to the NAD-dependent glycerol-3-phosphate dehydrogenase family.

It localises to the cytoplasm. It catalyses the reaction sn-glycerol 3-phosphate + NAD(+) = dihydroxyacetone phosphate + NADH + H(+). The enzyme catalyses sn-glycerol 3-phosphate + NADP(+) = dihydroxyacetone phosphate + NADPH + H(+). It participates in membrane lipid metabolism; glycerophospholipid metabolism. In terms of biological role, catalyzes the reduction of the glycolytic intermediate dihydroxyacetone phosphate (DHAP) to sn-glycerol 3-phosphate (G3P), the key precursor for phospholipid synthesis. This chain is Glycerol-3-phosphate dehydrogenase [NAD(P)+], found in Paraburkholderia phymatum (strain DSM 17167 / CIP 108236 / LMG 21445 / STM815) (Burkholderia phymatum).